Reading from the N-terminus, the 501-residue chain is Geissoschizine oxidase (501 aa).

Residues 1 to 21 (MEFSFSSPALYIVYFLLFFVV) traverse the membrane as a helical segment. Asn-60 is a glycosylation site (N-linked (GlcNAc...) asparagine). Cys-442 lines the heme pocket.

Belongs to the cytochrome P450 family. Heme serves as cofactor. As to expression, expressed in leaf epidermis. Also present in the leaf internal phloem-associated parenchyma (IPAP) inside the mesophyll.

It is found in the membrane. It carries out the reaction (19E)-geissoschizine + reduced [NADPH--hemoprotein reductase] + O2 = akuammicine + formate + oxidized [NADPH--hemoprotein reductase] + H2O + H(+). The catalysed reaction is (19E)-geissoschizine + reduced [NADPH--hemoprotein reductase] + O2 = 3,17-didehydrostemmadenine + oxidized [NADPH--hemoprotein reductase] + 2 H2O. It participates in alkaloid biosynthesis. Component of the seco-iridoid and derivatives monoterpenoid indole alkaloids (MIAs, e.g. vincristine, quinine, and strychnine) biosynthesis pathway. Catalyzes the oxidation of 19E-geissoschizine to produce a short-lived MIA unstable intermediate which can be spontaneously converted into akuammicine or oxidized by Redox1 and Redox2 to produce stemmadenine and 16S/R-deshydroxymethylstemmadenine (16S/R-DHS). In Catharanthus roseus (Madagascar periwinkle), this protein is Geissoschizine oxidase.